The following is a 476-amino-acid chain: Adenosylhomocysteinase (476 aa).

Positions 67, 142, and 202 each coordinate substrate. An NAD(+)-binding site is contributed by 203–205 (TTT). Residues Lys232 and Asp236 each coordinate substrate. NAD(+) contacts are provided by residues Asn237, 266–271 (GYGDVG), Glu289, Asn324, 345–347 (IGH), and Asn390.

Belongs to the adenosylhomocysteinase family. NAD(+) is required as a cofactor.

The protein localises to the cytoplasm. It catalyses the reaction S-adenosyl-L-homocysteine + H2O = L-homocysteine + adenosine. It functions in the pathway amino-acid biosynthesis; L-homocysteine biosynthesis; L-homocysteine from S-adenosyl-L-homocysteine: step 1/1. Its function is as follows. May play a key role in the regulation of the intracellular concentration of adenosylhomocysteine. In Prochlorococcus marinus (strain MIT 9211), this protein is Adenosylhomocysteinase.